We begin with the raw amino-acid sequence, 399 residues long: MNFRQLLLHLPRYLGASGSPRRLWWSPSLDTISSVGSWRGRSSKSPAHWNQVVSEAEKIVGYPTSFMSLRCLLSDELSNIAMQVRKLVGTQHPLLTTARGLVHDSWNSLQLRGLVVLLISKAAGPSSVNTSCQNYDMVSGIYSCQRSLAEITELIHIALLVHRGIVNLNELQSSDGPLKDMQFGNKIAILSGDFLLANACNGLALLQNTKVVELLASALMDLVQGVYHENSTSKESYITDDIGISTWKEQTFLSHGALLAKSCQAAMELAKHDAEVQNMAFQYGKHMAMSHKINSDVQPFIKEKTSDSMTFNLNSAPVVLHQEFLGRDLWIKQIGEAQEKGRLDYAKLRERIKAGKGVTSAIDLCRYHGNKALEALESFPPSEARSALENIVFAVTRFS.

The protein belongs to the FPP/GGPP synthase family. In terms of assembly, heterotetramer composed of 2 PDSS1/DPS1 and 2 PDSS2/DLP1 subunits.

The protein resides in the mitochondrion. The enzyme catalyses 7 isopentenyl diphosphate + (2E,6E)-farnesyl diphosphate = all-trans-decaprenyl diphosphate + 7 diphosphate. It carries out the reaction 6 isopentenyl diphosphate + (2E,6E)-farnesyl diphosphate = all-trans-nonaprenyl diphosphate + 6 diphosphate. Its pathway is cofactor biosynthesis; ubiquinone biosynthesis. Heterotetrameric enzyme that catalyzes the condensation of farnesyl diphosphate (FPP), which acts as a primer, and isopentenyl diphosphate (IPP) to produce prenyl diphosphates of varying chain lengths and participates in the determination of the side chain of ubiquinone. Supplies nona and decaprenyl diphosphate, the precursors for the side chain of the isoprenoid quinones ubiquinone-9 (Q9) and ubiquinone-10 (Q10) respectively. The enzyme adds isopentenyl diphosphate molecules sequentially to farnesyl diphosphate with trans stereochemistry. May play a role during cerebellar development. May regulate mitochondrial respiratory chain function. The polypeptide is All trans-polyprenyl-diphosphate synthase PDSS2 (Homo sapiens (Human)).